A 236-amino-acid chain; its full sequence is Small ribosomal subunit protein uS2c (236 aa).

The protein belongs to the universal ribosomal protein uS2 family.

It localises to the plastid. It is found in the chloroplast. The polypeptide is Small ribosomal subunit protein uS2c (rps2) (Aethionema grandiflorum (Persian stone-cress)).